The chain runs to 331 residues: 6-phosphogluconolactonase (331 aa).

Lys287 is modified (N6-acetyllysine).

This sequence belongs to the cycloisomerase 2 family.

It carries out the reaction 6-phospho-D-glucono-1,5-lactone + H2O = 6-phospho-D-gluconate + H(+). Its pathway is carbohydrate degradation; pentose phosphate pathway; D-ribulose 5-phosphate from D-glucose 6-phosphate (oxidative stage): step 2/3. In terms of biological role, catalyzes the hydrolysis of 6-phosphogluconolactone to 6-phosphogluconate. This is 6-phosphogluconolactonase from Escherichia coli O157:H7.